The following is a 178-amino-acid chain: Interleukin-10 (178 aa).

An N-terminal signal peptide occupies residues Met1 to Ala18. Cystine bridges form between Cys30–Cys126 and Cys80–Cys132. A glycan (N-linked (GlcNAc...) asparagine) is linked at Asn134.

Belongs to the IL-10 family. In terms of assembly, homodimer. Interacts with IL10RA and IL10RB.

It is found in the secreted. In terms of biological role, major immune regulatory cytokine that acts on many cells of the immune system where it has profound anti-inflammatory functions, limiting excessive tissue disruption caused by inflammation. Mechanistically, IL10 binds to its heterotetrameric receptor comprising IL10RA and IL10RB leading to JAK1 and STAT2-mediated phosphorylation of STAT3. In turn, STAT3 translocates to the nucleus where it drives expression of anti-inflammatory mediators. Targets antigen-presenting cells (APCs) such as macrophages and monocytes and inhibits their release of pro-inflammatory cytokines including granulocyte-macrophage colony-stimulating factor /GM-CSF, granulocyte colony-stimulating factor/G-CSF, IL-1 alpha, IL-1 beta, IL-6, IL-8 and TNF-alpha. Also interferes with antigen presentation by reducing the expression of MHC-class II and co-stimulatory molecules, thereby inhibiting their ability to induce T cell activation. In addition, controls the inflammatory response of macrophages by reprogramming essential metabolic pathways including mTOR signaling. This chain is Interleukin-10 (IL10), found in Cercocebus atys (Sooty mangabey).